The following is a 137-amino-acid chain: Glutamate mutase sigma subunit (137 aa).

The B12-binding domain occupies 3-137 (EVNLVLGVIG…KALKEDLGLM (135 aa)). Adenosylcob(III)alamin-binding positions include 13 to 17 (ADVHA), H16, 61 to 63 (SSL), and 93 to 97 (NLVVG).

This sequence belongs to the methylaspartate mutase GlmS subunit family. Heterotetramer composed of 2 epsilon subunits (GlmE) and 2 sigma subunits (GlmS). GlmE exists as a homodimer and GlmS as a monomer. The cofactor is adenosylcob(III)alamin.

The catalysed reaction is (2S,3S)-3-methyl-L-aspartate = L-glutamate. It participates in amino-acid degradation; L-glutamate degradation via mesaconate pathway; acetate and pyruvate from L-glutamate: step 1/4. Functionally, catalyzes the carbon skeleton rearrangement of L-glutamate to L-threo-3-methylaspartate ((2S,3S)-3-methylaspartate). This Carboxydothermus hydrogenoformans (strain ATCC BAA-161 / DSM 6008 / Z-2901) protein is Glutamate mutase sigma subunit.